The sequence spans 73 residues: MGDCRPLGFLIGLPFALVALVLALVGAVIWIIGTVLSCLCPCCFCFAALANFAVDLIKLPIKVLRWFTHSIPC.

An N-terminal signal peptide occupies residues 1-27 (MGDCRPLGFLIGLPFALVALVLALVGA).

In terms of tissue distribution, confined to the vasculature of various organs, including seedling roots, leaves, cotyledons, sepals and petals. Also accumulates in root hair cells.

The protein localises to the secreted. Signaling peptide involved in the regulation of lateral organs separation. In Arabidopsis thaliana (Mouse-ear cress), this protein is Signaling peptide TAXIMIN 2.